The chain runs to 450 residues: Nicotinamide phosphoribosyltransferase (450 aa).

R210 serves as a coordination point for diphosphate. Residue D233 participates in beta-nicotinamide D-ribonucleotide binding. Diphosphate is bound by residues H249 and R310. Residues 310 to 312 (RAD), 364 to 365 (GD), and R403 contribute to the beta-nicotinamide D-ribonucleotide site.

It belongs to the NAPRTase family.

It catalyses the reaction beta-nicotinamide D-ribonucleotide + diphosphate = 5-phospho-alpha-D-ribose 1-diphosphate + nicotinamide + H(+). The protein operates within cofactor biosynthesis; NAD(+) biosynthesis; nicotinamide D-ribonucleotide from 5-phospho-alpha-D-ribose 1-diphosphate and nicotinamide: step 1/1. Its function is as follows. Catalyzes the condensation of nicotinamide with 5-phosphoribosyl-1-pyrophosphate to yield nicotinamide mononucleotide, an intermediate in the biosynthesis of NAD. The sequence is that of Nicotinamide phosphoribosyltransferase from Mycoplasma genitalium (strain ATCC 33530 / DSM 19775 / NCTC 10195 / G37) (Mycoplasmoides genitalium).